A 1831-amino-acid polypeptide reads, in one-letter code: MSMRGSMRRSHLRQVSAASLDSVSSRSVDTAQHDALQLSDHPSSSDGKTYKFSSTGLDRRQCSLWVHDETFSKEEILFNQAAFADTGVRDGDLIEILSARTVVDGPSSGQSQSHSFNLAVKPDMRTRSMRDVHGHGHSHVETASSSRSHAMSKFKTPLQTRCLFIAKPLPNEIRTKHPKLELSVTSSVANIFGFKNRSTVYISIVEQTQCAASHVDISFRDQFLVRSDMWRLVMSELAGKIVYKGQKIVFMGSIKATVKNIFIRGKKVLSGFFSPQTIPVFRSESAKYVLFIQMSREMWDFDSEGTGDILFSRVINGFLPELFKRWANADARHLVTIVLFTRVEYDASITGLPSTLNSENLKNTSEPNHAPTRDFYRVVVNDMASGHWTTILDELKKDFRTFLRDVSILKVPEDPVASTSASTTPKATIGGRPSTALRGNILEAIHLASSHLAFDHIDRDMVHTGTSIIVITPGSGVFEVSYESLASTTEALTNRGIAIDLVCLSPMPLHSVPLFKYREPNRGGRSSFSYGGDIQGGGYSPEMRHPFASLTNRTHFSPKSTFSSTSPASGPRGPWTRANDWSYGIPHWLDISYWNPETYRESRRILKKDPNAPIPFTVTKKSKLFKSRVRMYEIQMGGVMESEQSNISIPYLLEDQITSRSLNVPPKTSFRRNSHFNHQLSDSLRPGSFLGNMTNPKETILSRSRSASATAAWMDNYDDNVFRSFSKRNHRRKQTKPKRPSEPEVQVSTTHDRLSARSITHLREHETKPNEWPRKEAAPKIPATKAVSPRKPALKAPSKTKVPRISRTISFALRGLGVAPPRAQASTEVNVEHATGLPSSNTKRSAGSLRESKSIESLSAASDSTSTATVVEASPMPSTPPRQRKSPTITPSRPISIRVPLKTPIEDSDQPTRSVAESFGTNGADLPITEKASLEHQTRKSIPRFELTTSPGLRESSAKNLQSRLLAPWVRSINPCNTPREVSRDTSWFGRWQHAYPRPPHVAVVKWKSLKSPAVLPLTTEEFPTASELASDYLQTPYRVFPNDDAEGIEAPKTTGLLMREMISLRLSHGFQIVVGNNVVEASGRYALRSPNVFDTQTLEMDGATVFLSKGHSIHRLVCTGGNEIEVTRFVHRSLSDLVSEKKNGLDIVYSLAMRTIMSREYDIKHINLRSSAEEYNWNYADNYIAGHRDYLFNPAQQLHFWRVRFVLIPVRLHVHARRHMQPINEDNEEEIHLLGINQLTLIWQRHKYVPPEEKRIETSSKSRDQNPLNILYQTRNPSEVVAAELNLLADPGLESSPAQLLPESELLERSSISLSSLAQIVQSDKGVRMMDRRWHWRLHYNCFIGSEFTTWLCQNFRDIETREEAVEFGNKLLELNLFQHVEQRHKFRDGNYFYQISSEYRVARPESRNSWFPQIRPDKSIPSTPATADNWKDSPLSAHSRSASVDQNAPQTPTTPSRSKSKASVMLSKTLKYDVDPRKRSNRPEVIDLHYDRLHNPDNCFHIELSWMNTTPKLIEDTVQSWAATAEKFGLKLVQVPIAEASAIDQTQPFRQPYRVKLKVPPPKGPSSTIFNAASFSQQDAPDPHYFQKLILKKFDFVLDFEARSAFPPDVEVGYSWGRPDYRYSQYIHQSGTLLVQITDEGDFLVLANRLVSTRTVPFTGTRDRDHRARAGYDPMGTIERDRLSPRLSPLVRPIHDIAGPASPMAHSSLDSASLYRAPEHVLHGFEEFCNDPVRLGQLYSESFVYPVSAKAAPTTASCVDSSIPSLELPAPVIGHHISPPPGTPVRPETRTRAASTSANGSLPLIDPRSRQREESSVARGSPRSASIML.

Disordered regions lie at residues 31–52 (AQHD…TYKF), 130–150 (RDVH…RSHA), 724–801 (SFSK…SKTK), and 820–924 (PPRA…TNGA). Residues 40–52 (DHPSSSDGKTYKF) are compositionally biased toward polar residues. Basic and acidic residues predominate over residues 130–140 (RDVHGHGHSHV). A compositionally biased stretch (basic residues) spans 725–738 (FSKRNHRRKQTKPK). Residues 750-778 (THDRLSARSITHLREHETKPNEWPRKEAA) are compositionally biased toward basic and acidic residues. Over residues 855–874 (IESLSAASDSTSTATVVEAS) the composition is skewed to low complexity. The span at 911–921 (PTRSVAESFGT) shows a compositional bias: polar residues. One can recognise a DEP domain in the interval 1324–1399 (SDKGVRMMDR…DGNYFYQISS (76 aa)). Disordered stretches follow at residues 1412-1467 (WFPQ…ASVM) and 1772-1831 (APVI…SIML). Positions 1438-1459 (SAHSRSASVDQNAPQTPTTPSR) are enriched in polar residues. A compositionally biased stretch (basic and acidic residues) spans 1809 to 1818 (PRSRQREESS).

This sequence belongs to the IML1 family.

It is found in the vacuole membrane. This Emericella nidulans (strain FGSC A4 / ATCC 38163 / CBS 112.46 / NRRL 194 / M139) (Aspergillus nidulans) protein is Vacuolar membrane-associated protein iml1 (iml1).